Here is a 195-residue protein sequence, read N- to C-terminus: Mannitol operon repressor (195 aa).

It belongs to the MtlR/FumE family. In terms of assembly, homodimer. Can also form higher level multimer aggregates.

Functionally, involved in the repression of the expression of the mannitol mtlADR operon. Does not bind the operator/promoter regulatory region of this operon. Therefore, seems to belong to a new class of transcription factors in bacteria that may regulate gene expression indirectly, perhaps as a part of a larger transcriptional complex. The sequence is that of Mannitol operon repressor from Escherichia coli O6:H1 (strain CFT073 / ATCC 700928 / UPEC).